A 206-amino-acid chain; its full sequence is Large ribosomal subunit protein uL4 (206 aa).

Positions 42-54 (RRQQGTHQSQGRS) are enriched in polar residues. Positions 42–94 (RRQQGTHQSQGRSDVSRTGAKMFKQKGTGRARHSSARAPQFRGGGKAHGPVFR) are disordered. Residues 64–76 (FKQKGTGRARHSS) show a composition bias toward basic residues.

The protein belongs to the universal ribosomal protein uL4 family. In terms of assembly, part of the 50S ribosomal subunit.

Its function is as follows. One of the primary rRNA binding proteins, this protein initially binds near the 5'-end of the 23S rRNA. It is important during the early stages of 50S assembly. It makes multiple contacts with different domains of the 23S rRNA in the assembled 50S subunit and ribosome. Functionally, forms part of the polypeptide exit tunnel. The protein is Large ribosomal subunit protein uL4 of Bartonella tribocorum (strain CIP 105476 / IBS 506).